Here is a 164-residue protein sequence, read N- to C-terminus: Large ribosomal subunit protein uL10 (164 aa).

It belongs to the universal ribosomal protein uL10 family. In terms of assembly, part of the ribosomal stalk of the 50S ribosomal subunit. The N-terminus interacts with L11 and the large rRNA to form the base of the stalk. The C-terminus forms an elongated spine to which L12 dimers bind in a sequential fashion forming a multimeric L10(L12)X complex.

Forms part of the ribosomal stalk, playing a central role in the interaction of the ribosome with GTP-bound translation factors. In Aliivibrio salmonicida (strain LFI1238) (Vibrio salmonicida (strain LFI1238)), this protein is Large ribosomal subunit protein uL10.